A 286-amino-acid chain; its full sequence is Shikimate dehydrogenase (NADP(+)) (286 aa).

Shikimate is bound by residues 22–24 (SRS) and Thr-71. Lys-75 (proton acceptor) is an active-site residue. Residue Glu-87 coordinates NADP(+). Shikimate-binding residues include Asn-96 and Asp-111. NADP(+) is bound by residues 136-140 (GAGGA), 160-165 (NRTPER), and Ile-225. Tyr-227 lines the shikimate pocket. Gly-248 provides a ligand contact to NADP(+).

Belongs to the shikimate dehydrogenase family. In terms of assembly, homodimer.

It catalyses the reaction shikimate + NADP(+) = 3-dehydroshikimate + NADPH + H(+). The protein operates within metabolic intermediate biosynthesis; chorismate biosynthesis; chorismate from D-erythrose 4-phosphate and phosphoenolpyruvate: step 4/7. Functionally, involved in the biosynthesis of the chorismate, which leads to the biosynthesis of aromatic amino acids. Catalyzes the reversible NADPH linked reduction of 3-dehydroshikimate (DHSA) to yield shikimate (SA). This is Shikimate dehydrogenase (NADP(+)) from Sinorhizobium medicae (strain WSM419) (Ensifer medicae).